The primary structure comprises 496 residues: Legumin (496 aa).

The signal sequence occupies residues 1 to 21 (MAKLLALSLSFCFLLFGTCFA). 2 disulfides stabilise this stretch: Cys31–Cys64 and Cys107–Cys318. The 195-residue stretch at 36-230 (LNALKPDNRI…ALNVNRRIVN (195 aa)) folds into the Cupin type-1 1 domain. The interval 240-311 (EKGAIVKVKG…RGGSKSQRDN (72 aa)) is disordered. Basic and acidic residues predominate over residues 257 to 269 (PEKEPRQKRGSRQ). The Cupin type-1 2 domain occupies 324-453 (QNIGSSSSPD…INVCQKKLLQ (130 aa)).

This sequence belongs to the 11S seed storage protein (globulins) family. Hexamer; each subunit is composed of an acidic and a basic chain derived from a single precursor and linked by a disulfide bond.

Functionally, seed storage protein. Alpha-amylase inhibitor. This is Legumin from Cicer arietinum (Chickpea).